Consider the following 382-residue polypeptide: Serine/arginine-rich splicing factor SR45a (382 aa).

Low complexity-rich tracts occupy residues 30 to 45 (PMSY…SLSP), 54 to 68 (VSRS…SVSS), 177 to 195 (PSYS…SRSY), and 202 to 219 (SYSP…YSPF). 2 disordered regions span residues 30 to 76 (PMSY…PGNS) and 150 to 382 (KARR…SVSP). Positions 288 to 316 (RARDRSCSPYYRGRDRSYSPHYQGRDRSY) are enriched in basic and acidic residues. Low complexity predominate over residues 329 to 343 (VSGSVSPGGRSMSRS). Positions 345-361 (SPRKGRKESRSKSRRHD) are enriched in basic residues. Low complexity predominate over residues 364 to 382 (SSMCHSRSARSSTSRSVSP).

The protein belongs to the splicing factor SR family. SR45 subfamily. Component of the spliceosome. Homodimer. Interacts with PRP38, SCL28, SR45, RNU1 and U2AF35B. Post-translationally, phosphorylated. Expressed in leaves, stems and roots.

It is found in the nucleus speckle. Probable splicing factor involved in constitutive and/or alternative splicing events. May bridge the 5' and 3' components of the spliceosome. The chain is Serine/arginine-rich splicing factor SR45a (SR45A) from Arabidopsis thaliana (Mouse-ear cress).